The chain runs to 157 residues: Cyclic pyranopterin monophosphate synthase (157 aa).

Substrate-binding positions include 74 to 76 (MCH) and 112 to 113 (ME). Asp-127 is a catalytic residue.

The protein belongs to the MoaC family. Homohexamer; trimer of dimers.

It catalyses the reaction (8S)-3',8-cyclo-7,8-dihydroguanosine 5'-triphosphate = cyclic pyranopterin phosphate + diphosphate. The protein operates within cofactor biosynthesis; molybdopterin biosynthesis. Its function is as follows. Catalyzes the conversion of (8S)-3',8-cyclo-7,8-dihydroguanosine 5'-triphosphate to cyclic pyranopterin monophosphate (cPMP). The sequence is that of Cyclic pyranopterin monophosphate synthase from Campylobacter jejuni subsp. jejuni serotype O:23/36 (strain 81-176).